A 1072-amino-acid polypeptide reads, in one-letter code: Carbamoyl phosphate synthase large chain (1072 aa).

A carboxyphosphate synthetic domain region spans residues 1–401 (MPKRLDINTI…SLLKAVRSLE (401 aa)). Residues R129, R169, G175, G176, K208, I210, E215, G241, V242, H243, Q284, and E298 each contribute to the ATP site. The ATP-grasp 1 domain occupies 133-327 (RTLMQELNEP…IAKLAAKIAV (195 aa)). Residues Q284, E298, and N300 each coordinate Mg(2+). Residues Q284, E298, and N300 each coordinate Mn(2+). Residues 402–546 (LGIYHLELDH…YSTYADENES (145 aa)) form an oligomerization domain region. The tract at residues 547-929 (IVTDRKSVVV…ALYKGLVASG (383 aa)) is carbamoyl phosphate synthetic domain. An ATP-grasp 2 domain is found at 671–861 (EAALTKLGIP…MANVATKVIL (191 aa)). Positions 707, 746, 752, 777, 778, 779, 780, 820, and 832 each coordinate ATP. Mg(2+) is bound by residues Q820, E832, and N834. The Mn(2+) site is built by Q820, E832, and N834. In terms of domain architecture, MGS-like spans 930–1072 (INIPTHGSVI…QTKRHEVVHA (143 aa)). The segment at 930 to 1072 (INIPTHGSVI…QTKRHEVVHA (143 aa)) is allosteric domain.

This sequence belongs to the CarB family. Composed of two chains; the small (or glutamine) chain promotes the hydrolysis of glutamine to ammonia, which is used by the large (or ammonia) chain to synthesize carbamoyl phosphate. Tetramer of heterodimers (alpha,beta)4. It depends on Mg(2+) as a cofactor. Requires Mn(2+) as cofactor.

The catalysed reaction is hydrogencarbonate + L-glutamine + 2 ATP + H2O = carbamoyl phosphate + L-glutamate + 2 ADP + phosphate + 2 H(+). It catalyses the reaction hydrogencarbonate + NH4(+) + 2 ATP = carbamoyl phosphate + 2 ADP + phosphate + 2 H(+). Its pathway is amino-acid biosynthesis; L-arginine biosynthesis; carbamoyl phosphate from bicarbonate: step 1/1. The protein operates within pyrimidine metabolism; UMP biosynthesis via de novo pathway; (S)-dihydroorotate from bicarbonate: step 1/3. Functionally, large subunit of the glutamine-dependent carbamoyl phosphate synthetase (CPSase). CPSase catalyzes the formation of carbamoyl phosphate from the ammonia moiety of glutamine, carbonate, and phosphate donated by ATP, constituting the first step of 2 biosynthetic pathways, one leading to arginine and/or urea and the other to pyrimidine nucleotides. The large subunit (synthetase) binds the substrates ammonia (free or transferred from glutamine from the small subunit), hydrogencarbonate and ATP and carries out an ATP-coupled ligase reaction, activating hydrogencarbonate by forming carboxy phosphate which reacts with ammonia to form carbamoyl phosphate. The sequence is that of Carbamoyl phosphate synthase large chain from Bacillus cereus (strain AH820).